A 475-amino-acid chain; its full sequence is Ankyrin repeat, SAM and basic leucine zipper domain-containing protein 1 (475 aa).

The segment at 1–25 (MAASALRGLPVAGGGESSESEDDGW) is disordered. Phosphoserine occurs at positions 17, 18, and 20. ANK repeat units follow at residues 45–74 (EKKEKFKKAMTIGDVSLVQELLDSGISVDS), 78–107 (YGWTPLMYAASVANAELVRVLLDRGANASF), 110–144 (DKQSILITACSAHGSEEQILKCVELLLSRNADPNV), 148–177 (RLMTPIMYAARDGHTQVVALLVAHGAEVNT), 181–210 (NGYTALTWAARQGHKNIVLKLLELGANKML), and 214–243 (DGKMPSEIAKRNKHHEIFNLLSFTLNPLEG). One can recognise an SAM domain in the interval 272–334 (SYTAFGDLEV…KILAALKELQ (63 aa)).

In terms of assembly, interacts with DDX4, PIWIL1, RANBP9 and TDRD1.

It is found in the cytoplasm. In terms of biological role, plays a central role during spermatogenesis by repressing transposable elements and preventing their mobilization, which is essential for the germline integrity. Acts via the piRNA metabolic process, which mediates the repression of transposable elements during meiosis by forming complexes composed of piRNAs and Piwi proteins and governs the methylation and subsequent repression of transposons. Its association with pi-bodies suggests a participation in the primary piRNAs metabolic process. Required prior to the pachytene stage to facilitate the production of multiple types of piRNAs, including those associated with repeats involved in the regulation of retrotransposons. May act by mediating protein-protein interactions during germ cell maturation. The protein is Ankyrin repeat, SAM and basic leucine zipper domain-containing protein 1 (ASZ1) of Pan troglodytes (Chimpanzee).